Consider the following 313-residue polypeptide: MTKAGMTKAGEPRRILFVTGMSGSGKKTALTALEDMGWETVDNLPVSLLERLLAASPAEGSIDEGRPLALGIDSRTRDFDSRGVVRRVRSLRDGGRDASILFFDCSNTELSRRYSETRARHPLARDRQVEDGISYERELLAPLREAADELIDTTDSSTNELQALLRRRFGDSAGTGTTLTVMSFAFSRGVPRDADLMFDMRFLRNPHWVPELKPHSGLDPDVGAYIAGDPIYPEARARIEELILLLLPRYETEGKSYVTIAIGCTGGKHRSVHFAETLASRLRQEGFSPTVRHRDLTRQKSNAEESTVPGVGS.

ATP is bound at residue 20 to 27 (GMSGSGKK). 73 to 76 (DSRT) contacts GTP. Residues 289–313 (PTVRHRDLTRQKSNAEESTVPGVGS) form a disordered region. Positions 292–303 (RHRDLTRQKSNA) are enriched in basic and acidic residues.

This sequence belongs to the RapZ-like family.

Its function is as follows. Displays ATPase and GTPase activities. The protein is Nucleotide-binding protein Swit_0399 of Rhizorhabdus wittichii (strain DSM 6014 / CCUG 31198 / JCM 15750 / NBRC 105917 / EY 4224 / RW1) (Sphingomonas wittichii).